Reading from the N-terminus, the 499-residue chain is Cytochrome P450 81Q32 (499 aa).

Residues 5-25 (TLLYTFLAVVLLSISLKLFPV) form a helical membrane-spanning segment. Residues Asn112, Asn183, and Asn266 are each glycosylated (N-linked (GlcNAc...) asparagine). A heme-binding site is contributed by Cys434.

This sequence belongs to the cytochrome P450 family. As to expression, expressed in leaf epidermis and in the leaf internal phloem-associated parenchyma (IPAP) inside the mesophyll.

The protein localises to the membrane. This chain is Cytochrome P450 81Q32, found in Catharanthus roseus (Madagascar periwinkle).